The primary structure comprises 968 residues: RNA polymerase-associated protein RapA (968 aa).

The Helicase ATP-binding domain maps to 163 to 332 (EVGRRYAPRV…FARLRLLDPD (170 aa)). An ATP-binding site is contributed by 176–183 (DEVGLGKT). Residues 278 to 281 (DEAH) carry the DEAH box motif. The Helicase C-terminal domain maps to 491–655 (RVDWLIEFLK…EFAEDLLNVL (165 aa)).

It belongs to the SNF2/RAD54 helicase family. RapA subfamily. As to quaternary structure, interacts with the RNAP. Has a higher affinity for the core RNAP than for the holoenzyme. Its ATPase activity is stimulated by binding to RNAP.

Transcription regulator that activates transcription by stimulating RNA polymerase (RNAP) recycling in case of stress conditions such as supercoiled DNA or high salt concentrations. Probably acts by releasing the RNAP, when it is trapped or immobilized on tightly supercoiled DNA. Does not activate transcription on linear DNA. Probably not involved in DNA repair. The polypeptide is RNA polymerase-associated protein RapA (Shewanella baltica (strain OS223)).